Consider the following 345-residue polypeptide: Phenylalanine--tRNA ligase alpha subunit (345 aa).

Glutamate 253 serves as a coordination point for Mg(2+).

Belongs to the class-II aminoacyl-tRNA synthetase family. Phe-tRNA synthetase alpha subunit type 1 subfamily. Tetramer of two alpha and two beta subunits. Requires Mg(2+) as cofactor.

It is found in the cytoplasm. The enzyme catalyses tRNA(Phe) + L-phenylalanine + ATP = L-phenylalanyl-tRNA(Phe) + AMP + diphosphate + H(+). This chain is Phenylalanine--tRNA ligase alpha subunit, found in Nitratidesulfovibrio vulgaris (strain DP4) (Desulfovibrio vulgaris).